We begin with the raw amino-acid sequence, 284 residues long: Probable tRNA-splicing endonuclease subunit sen34 (284 aa).

Active-site residues include Tyr206, His214, and Lys245.

This sequence belongs to the tRNA-intron endonuclease family. Heterotetramer composed of sen2, sen15, sen34 and sen54. Interacts directly with sen15.

The enzyme catalyses pretRNA = a 3'-half-tRNA molecule with a 5'-OH end + a 5'-half-tRNA molecule with a 2',3'-cyclic phosphate end + an intron with a 2',3'-cyclic phosphate and a 5'-hydroxyl terminus.. Constitutes one of the two catalytic subunit of the tRNA-splicing endonuclease complex, a complex responsible for identification and cleavage of the splice sites in pre-tRNA. It cleaves pre-tRNA at the 5'- and 3'-splice sites to release the intron. The products are an intron and two tRNA half-molecules bearing 2',3'-cyclic phosphate and 5'-OH termini. There are no conserved sequences at the splice sites, but the intron is invariably located at the same site in the gene, placing the splice sites an invariant distance from the constant structural features of the tRNA body. It probably carries the active site for 3'-splice site cleavage. This chain is Probable tRNA-splicing endonuclease subunit sen34 (sen34), found in Schizosaccharomyces pombe (strain 972 / ATCC 24843) (Fission yeast).